The sequence spans 80 residues: D-alanyl carrier protein 1 (80 aa).

The Carrier domain occupies 1–80 (MTMDDTKATV…KIVAKVENLQ (80 aa)). S38 bears the O-(pantetheine 4'-phosphoryl)serine mark.

This sequence belongs to the DltC family. Post-translationally, 4'-phosphopantetheine is transferred from CoA to a specific serine of apo-DCP.

It is found in the cytoplasm. Its pathway is cell wall biogenesis; lipoteichoic acid biosynthesis. Functionally, carrier protein involved in the D-alanylation of lipoteichoic acid (LTA). The loading of thioester-linked D-alanine onto DltC is catalyzed by D-alanine--D-alanyl carrier protein ligase DltA. The DltC-carried D-alanyl group is further transferred to cell membrane phosphatidylglycerol (PG) by forming an ester bond, probably catalyzed by DltD. D-alanylation of LTA plays an important role in modulating the properties of the cell wall in Gram-positive bacteria, influencing the net charge of the cell wall. In Lactiplantibacillus plantarum (strain ATCC BAA-793 / NCIMB 8826 / WCFS1) (Lactobacillus plantarum), this protein is D-alanyl carrier protein 1.